The following is a 137-amino-acid chain: Putative pre-16S rRNA nuclease (137 aa).

It belongs to the YqgF nuclease family.

Its subcellular location is the cytoplasm. Functionally, could be a nuclease involved in processing of the 5'-end of pre-16S rRNA. The polypeptide is Putative pre-16S rRNA nuclease (Bacillus cereus (strain B4264)).